Consider the following 146-residue polypeptide: Basic phospholipase A2 beta-bungarotoxin A2 chain (146 aa).

Residues 1 to 19 (MNPAHLLVLSAVCVSLLGA) form the signal peptide. A propeptide spanning residues 20-27 (SNIPPQSL) is cleaved from the precursor. Cystine bridges form between cysteine 54–cysteine 145, cysteine 56–cysteine 72, cysteine 71–cysteine 126, cysteine 78–cysteine 119, cysteine 87–cysteine 112, and cysteine 105–cysteine 117. Ca(2+) contacts are provided by tyrosine 55, glycine 57, and glycine 59. Histidine 75 is a catalytic residue. Aspartate 76 is a Ca(2+) binding site. Residue aspartate 120 is part of the active site.

Belongs to the phospholipase A2 family. Group I subfamily. D49 sub-subfamily. Heterodimer; disulfide-linked. The A chain has phospholipase A2 activity and the B chain shows homology with the basic protease inhibitors. Ca(2+) serves as cofactor. In terms of tissue distribution, expressed by the venom gland.

It localises to the secreted. The enzyme catalyses a 1,2-diacyl-sn-glycero-3-phosphocholine + H2O = a 1-acyl-sn-glycero-3-phosphocholine + a fatty acid + H(+). Snake venom phospholipase A2 (PLA2) that inhibits neuromuscular transmission by blocking acetylcholine release from the nerve termini. PLA2 catalyzes the calcium-dependent hydrolysis of the 2-acyl groups in 3-sn-phosphoglycerides. The protein is Basic phospholipase A2 beta-bungarotoxin A2 chain of Bungarus flaviceps flaviceps (Red-headed krait).